We begin with the raw amino-acid sequence, 366 residues long: Zinc finger protein ubi-d4 B (366 aa).

2 disordered regions span residues 41–94 (ASAP…DGSS) and 140–167 (DDLD…IGGA). Residues 76-86 (PDPEQMLKKEG) show a composition bias toward basic and acidic residues. Residues 140 to 149 (DDLDDEDYEE) are compositionally biased toward acidic residues. The C2H2-type zinc-finger motif lies at 183 to 206 (YACDICGKRYKNRPGLSYHYAHSH). The interval 211-243 (EGAGAEDKEDSQPPTPIMHRSEEQKSKKGPDGL) is disordered. Residues 229 to 240 (HRSEEQKSKKGP) are compositionally biased toward basic and acidic residues. 2 PHD-type zinc fingers span residues 247–307 (NNYC…CKCC) and 304–354 (CKCC…CLDL).

Belongs to the requiem/DPF family.

It localises to the cytoplasm. Its subcellular location is the nucleus. Functionally, may be a transcription factor required for the apoptosis response following survival factor withdrawal from myeloid cells. Might also have a role in the development and maturation of lymphoid cells. The protein is Zinc finger protein ubi-d4 B (req-b) of Xenopus laevis (African clawed frog).